We begin with the raw amino-acid sequence, 149 residues long: Deoxyuridine 5'-triphosphate nucleotidohydrolase (149 aa).

Residues 68 to 70 (RSG), Asn-81, 85 to 87 (LID), and Met-95 each bind substrate.

Belongs to the dUTPase family. It depends on Mg(2+) as a cofactor.

It carries out the reaction dUTP + H2O = dUMP + diphosphate + H(+). It functions in the pathway pyrimidine metabolism; dUMP biosynthesis; dUMP from dCTP (dUTP route): step 2/2. This enzyme is involved in nucleotide metabolism: it produces dUMP, the immediate precursor of thymidine nucleotides and it decreases the intracellular concentration of dUTP so that uracil cannot be incorporated into DNA. This chain is Deoxyuridine 5'-triphosphate nucleotidohydrolase, found in Bordetella avium (strain 197N).